A 93-amino-acid polypeptide reads, in one-letter code: YcgL domain-containing protein Shal_1837 (93 aa).

Positions 1 to 85 (MICAVYKSRR…PVVNLLEQHK (85 aa)) constitute a YcgL domain.

This chain is YcgL domain-containing protein Shal_1837, found in Shewanella halifaxensis (strain HAW-EB4).